Here is a 985-residue protein sequence, read N- to C-terminus: Invasin (985 aa).

Residues serine 494–lysine 594 are D1. The Extracellular segment spans residues serine 494 to isoleucine 985. Big-1 domains are found at residues threonine 503–lysine 594 and lysine 601–threonine 691. Positions glycine 595 to proline 694 are D2. Residues isoleucine 695–valine 794 are D3. The tract at residues proline 795–asparagine 886 is D4. The segment at proline 795–isoleucine 985 is integrin-binding. Residues arginine 887–isoleucine 985 are D5. Cysteines 906 and 981 form a disulfide.

This sequence belongs to the intimin/invasin family.

The protein resides in the cell surface. Functionally, invasin is a protein that allows enteric bacteria to penetrate cultured mammalian cells. The entry of invasin in the cell is mediated by binding several beta-1 chain integrins. This chain is Invasin, found in Yersinia pseudotuberculosis serotype I (strain IP32953).